Here is a 647-residue protein sequence, read N- to C-terminus: MSDLYTIDPMLAKDAHIDRAHYKTLYHESIEQPEAFWNKVSQRLEWFKAPTKIKNVSYQLEDVHIRWFEDGELNASVNCLDRHLTLRGDKTALLFEPDAPDAPSSRITYRELYERVCQLGNALRHLGIEKGDRVTIYLPMIPDAVVAILACARIGAIHSVVFGGFAANSIADRVNDCGSKLIITADEGLRGGRKIPLKANVDAALKIHGTQSVETVLVVRHTGSTINMHTPRDRWFHDLVDIQATECAPERMNAEDSLFILYTSGSTGKPKGVLHTTGGYLVYTSYTHETVFDLRENDIYWCTADIGWITGHSYIVYGPLANGTTVLLFEGTPHYPTVSRFWEVIDKHHVTLFYTAPTAIRALMREGDTPVKKTSRKSLRLLGSVGEPINPEAWHWYYTIVGNGRCPIVDTWWQTETGGILITPLIGATDLKPGSVTLPFFGIRPALVDTNGQTLDGPAAGNLVLLDSWPGQMRTLYGDHQRFIDTYFRTYPNTYFTGDGCRRDADGYYWITGRVDDVINISGHRIGTAEIESTLVAHPKVAEAAVVGFPHPIKGQGIYAYVTLITGETPSEALHQELLTWVRKEIGAIAIPDHVQWASNLPKTRSGKIMRRILRKIAENAPDQLGDTSTLADPSIVDLLLNERLKH.

Residues 190-193 and threonine 310 contribute to the CoA site; that span reads RGGR. ATP-binding positions include 386–388, 410–415, aspartate 499, and arginine 514; these read GEP and DTWWQT. Serine 522 serves as a coordination point for CoA. ATP is bound at residue arginine 525. Mg(2+)-binding residues include valine 536, histidine 538, and valine 541. Residue arginine 583 participates in CoA binding. Residue lysine 608 is modified to N6-acetyllysine.

The protein belongs to the ATP-dependent AMP-binding enzyme family. The cofactor is Mg(2+). In terms of processing, acetylated. Deacetylation by the SIR2-homolog deacetylase activates the enzyme.

It catalyses the reaction acetate + ATP + CoA = acetyl-CoA + AMP + diphosphate. Functionally, catalyzes the conversion of acetate into acetyl-CoA (AcCoA), an essential intermediate at the junction of anabolic and catabolic pathways. AcsA undergoes a two-step reaction. In the first half reaction, AcsA combines acetate with ATP to form acetyl-adenylate (AcAMP) intermediate. In the second half reaction, it can then transfer the acetyl group from AcAMP to the sulfhydryl group of CoA, forming the product AcCoA. The protein is Acetyl-coenzyme A synthetase of Xylella fastidiosa (strain Temecula1 / ATCC 700964).